Here is a 419-residue protein sequence, read N- to C-terminus: Putative actin-fragmin kinase DDB_G0279609 (419 aa).

The interval 73–94 (INNNNNSINNNNNNNNKNKNKN) is disordered.

The protein belongs to the protein kinase superfamily. AFK Ser/Thr protein kinase family.

This is Putative actin-fragmin kinase DDB_G0279609 from Dictyostelium discoideum (Social amoeba).